Reading from the N-terminus, the 167-residue chain is Menaquinol:cytochrome c reductase iron-sulfur subunit (167 aa).

Positions 59 to 158 (TKEPQRFDFK…QEVKDGFLYL (100 aa)) constitute a Rieske domain. Residues C100, H102, C121, and H124 each contribute to the [2Fe-2S] cluster site. A disulfide bridge links C105 with C123.

This sequence belongs to the Rieske iron-sulfur protein family. As to quaternary structure, the main subunits of the menaquinol:cytochrome c complex are a Rieske-type iron-sulfur protein (QcrA), a cytochrome b (QcrB) and a cytochrome c (QcrC). [2Fe-2S] cluster is required as a cofactor.

Functionally, component of the menaquinol:cytochrome c reductase complex. The Rieske protein is a high potential 2Fe-2S protein. This chain is Menaquinol:cytochrome c reductase iron-sulfur subunit (qcrA), found in Bacillus subtilis (strain 168).